The following is a 1128-amino-acid chain: Inactive phospholipase C-like protein 2 (1128 aa).

Positions 1 to 129 (MAECGRGAAG…KKTVSFSSMP (129 aa)) are disordered. The residue at position 2 (A2) is an N-acetylalanine. At S16 the chain carries Phosphoserine. Residues 20–30 (ALGAKGALKAG) show a composition bias toward low complexity. Over residues 31-43 (AGEGGGGGGGGRL) the composition is skewed to gly residues. T85 carries the phosphothreonine modification. In terms of domain architecture, PH spans 142–252 (NSMVEGSELK…WVTGLRYLIS (111 aa)). The 145-residue stretch at 427–571 (QDMKQPLSHY…LKGKILIKAK (145 aa)) folds into the PI-PLC X-box domain. T585 is subject to Phosphothreonine. Positions 619-735 (LSELVSICKS…GYVLRPAIMR (117 aa)) constitute a PI-PLC Y-box domain. The 130-residue stretch at 735-864 (REEVSFFSAN…TGYRHVPLQS (130 aa)) folds into the C2 domain. Residues 1100–1128 (KPGTENSEAQKPRRSLEAIPEKASDENGD) form a disordered region. The span at 1107 to 1128 (EAQKPRRSLEAIPEKASDENGD) shows a compositional bias: basic and acidic residues. Phosphoserine is present on S1114.

In terms of tissue distribution, ubiquitously expressed, with a strong expression in skeletal muscle.

Its subcellular location is the cytoplasm. Functionally, may play an role in the regulation of Ins(1,4,5)P3 around the endoplasmic reticulum. This is Inactive phospholipase C-like protein 2 (Plcl2) from Mus musculus (Mouse).